A 459-amino-acid chain; its full sequence is Protein U54 (459 aa).

The N-terminal stretch at 1–20 (MQPATLQWSSYVLQLRLTTA) is a signal peptide. Asn76, Asn100, Asn281, Asn321, and Asn452 each carry an N-linked (GlcNAc...) asparagine; by host glycan.

Belongs to the herpesviridae UL82 family.

The polypeptide is Protein U54 (U54) (Homo sapiens (Human)).